The sequence spans 113 residues: MTRVKRGYVARKRRNKILRANRSFRGTHSKLFRIANQQHMKALRYSYRDRACKKRDFRHLWITRINAVVRSYGLNYSRFMHQLRLGNMVLNRKVLSQLASLDPASFNRLIRAT.

The protein belongs to the bacterial ribosomal protein bL20 family.

Its subcellular location is the plastid. It localises to the chloroplast. Its function is as follows. Binds directly to 23S ribosomal RNA and is necessary for the in vitro assembly process of the 50S ribosomal subunit. It is not involved in the protein synthesizing functions of that subunit. The polypeptide is Large ribosomal subunit protein bL20c (Nephroselmis olivacea (Green alga)).